The sequence spans 305 residues: MNNYPTALFLMGPTASGKTDLAIKLALQCDCEIISVDSALIYKGMDIGTAKPSNHELQQVPHALVDIIDPLESYSAGDFREDALSLMQEITDRGHTPLLVGGTMLYYKALVDGLSPLPSANPKVRAQIEKEALENGWQALHDKLEQIDPVSAARIHVNDPQRLARALEVFRISGKSLTELTKVKSDPIPYNIKQFAIAPLEKSVLHARIEQRFELMLESGFEQEVRKLYQRGDLHLDLPSMRCVGYRQMWEYLQGTMDYEEMRFRGIVATRQLAKRQMTWLRGWQNVTWLETGHADNFERIKAML.

12–19 (GPTASGKT) serves as a coordination point for ATP. Position 14–19 (14–19 (TASGKT)) interacts with substrate. Interaction with substrate tRNA stretches follow at residues 37-40 (DSAL), 161-165 (QRLAR), and 242-247 (RCVGYR).

Belongs to the IPP transferase family. As to quaternary structure, monomer. Mg(2+) serves as cofactor.

The enzyme catalyses adenosine(37) in tRNA + dimethylallyl diphosphate = N(6)-dimethylallyladenosine(37) in tRNA + diphosphate. In terms of biological role, catalyzes the transfer of a dimethylallyl group onto the adenine at position 37 in tRNAs that read codons beginning with uridine, leading to the formation of N6-(dimethylallyl)adenosine (i(6)A). The polypeptide is tRNA dimethylallyltransferase (Psychromonas ingrahamii (strain DSM 17664 / CCUG 51855 / 37)).